The primary structure comprises 447 residues: UDP-glycosyltransferase 76B1 (447 aa).

Residues Ser269, 327-328, 345-353, and 367-370 contribute to the UDP-alpha-D-glucose site; these read WA, HCGWNSTLE, and FGDQ.

The protein belongs to the UDP-glycosyltransferase family. Expressed in roots, leaves, hydathodes, sepals and style.

In terms of biological role, glycosylates the amino acid-related molecules isoleucic acid (2-hydroxy-3-methylpentanoic acid) and valic acid (2-hydroxy-3-methylbutyric acid). Acts as a negative regulator of salicylic acid (SA)-dependent plant defense in the absence of pathogens and promotes the jasmonate (JA) response. Negatively influences the onset of senescence. The polypeptide is UDP-glycosyltransferase 76B1 (Arabidopsis thaliana (Mouse-ear cress)).